Here is a 252-residue protein sequence, read N- to C-terminus: Short-chain dehydrogenase/reductase eriH (252 aa).

NADP(+)-binding residues include Ile16, Asp65, Asn92, Lys125, Tyr158, Lys162, Val191, and Thr193. Tyr158 serves as the catalytic Proton acceptor. The Proton donor role is filled by Tyr158. Catalysis depends on Lys162, which acts as the Lowers pKa of active site Tyr.

Belongs to the short-chain dehydrogenases/reductases (SDR) family.

It carries out the reaction cyathadiol + reduced [NADPH--hemoprotein reductase] + O2 = cyathatriol + oxidized [NADPH--hemoprotein reductase] + H2O + H(+). The enzyme catalyses 11-O-acetylcyathatriol + A = 11-O-acetylcyathin A3 + AH2. It catalyses the reaction cyathatriol + A = cyathin A3 + AH2. It participates in secondary metabolite biosynthesis. In terms of biological role, short-chain dehydrogenase/reductase; part of the gene cluster that mediates the biosynthesis of erinacines, cyathane-xylosides that show unique biological activities, including leishmanicidal activity, stimulating activity for nerve growth-factor synthesis, and agonistic activity toward the kappa opioid receptor. Within the pathway, eriH works with eriA to catalyze C-11 hydroxylation of cyathadiol to produce cyathatriol. EriH also catalyzes oxidation of 11-O-acetyl-cyathatriol into 1-O-acetylcyathin A3. In the absence of eriL and eriJ, the SDR eriH is able to convert cyathatriol to cyathin A3; this is likely a switching mechanism in the biosynthesis of cyathins (C-14 ketogroup)and erinacines (C-14 glycosylated group). The first step of the erinacines biosynthesis pathway is catalyzed by the geranylgeranyl diphosphate (GGPP) synthase eriE via conversion of farnesyl pyrophosphate and isopentyl pyrophosphate into geranylgeranyl pyrophosphate (GGPP). GGPP is then substrate of the diterpene cyclase eriG for the production of cyatha-3,12-diene. The cytochrome P450 monooxygenase eriI then hydroxylates cyatha-3,12-diene at C-14 of the seven-membered ring to produce erinacol, which is further hydroxylated at C-15 by the cytochrome P450 monooxygenase eriC to yield cyathadiol. The cytochrome P450 monooxygenase eriA then catalyzes C-11 hydroxylation in the presence of the short chain dehydrogenase/reductase (SDR) eriH, which leads to the production of cyathatriol. The acetyltransferase eriL converts cyathatriol into 11-O-acetyl-cyathatriol. The SDR eriH catalyzes further oxidation of 11-O-acetyl-cyathatriol into 1-O-acetylcyathin A3. Finally, the glycosyl transferase eriJ tranfers xylose from UDP-xylose onto C-14 of 11-O-acetyl-cyathatriol to form eracine Q. EriJ is also able to convert 11-O-acetyl-cyathatriol to eracine Q2 by using UDP-D-glucose as cosubstrate, but at a lower rate. This is Short-chain dehydrogenase/reductase eriH from Hericium erinaceus (Lion's mane mushroom).